Reading from the N-terminus, the 135-residue chain is UPF0355 protein SE_2351 (135 aa).

It belongs to the UPF0355 family.

In Staphylococcus epidermidis (strain ATCC 12228 / FDA PCI 1200), this protein is UPF0355 protein SE_2351.